Reading from the N-terminus, the 186-residue chain is MRDAIDKYATYSVSRLNNVTTYLPGKVDGSGKDQIWISPNNFQVNREWGNGAHFKDKAYRFNFDVKVEYDVEVKAAWWTALFRGSIPGYWKGKFKVTYSFNGEVPSWNYGDKQVRPPQYSFKEQEKQLLFVPRHVQKIEAEGKHLEIINPFLKDQHLDFFEHYHPDLTQPLDMVSYLMYAIADKVK.

Belongs to the MG032/MG096/MG288 family.

This is an uncharacterized protein from Mycoplasma pneumoniae (strain ATCC 29342 / M129 / Subtype 1) (Mycoplasmoides pneumoniae).